The primary structure comprises 335 residues: RNA polymerase sigma factor RpoS (335 aa).

The tract at residues Asp-57–Ala-90 is sigma-70 factor domain-1. The sigma-70 factor domain-2 stretch occupies residues Met-95–Thr-165. Residues Asp-119 to Glu-122 carry the Interaction with polymerase core subunit RpoC motif. The segment at Glu-175–Ser-250 is sigma-70 factor domain-3. The interval Trp-263–Glu-316 is sigma-70 factor domain-4. The H-T-H motif DNA-binding region spans Leu-289 to Val-308.

Belongs to the sigma-70 factor family. RpoS subfamily. Interacts with the RNA polymerase core enzyme.

It localises to the cytoplasm. Sigma factors are initiation factors that promote the attachment of RNA polymerase to specific initiation sites and are then released. This sigma factor is the master transcriptional regulator of the stationary phase and the general stress response. May be required for the persistence of V.cholerae in aquatic habitats. In Vibrio cholerae serotype O1 (strain ATCC 39315 / El Tor Inaba N16961), this protein is RNA polymerase sigma factor RpoS.